The chain runs to 265 residues: 4-hydroxy-tetrahydrodipicolinate reductase (265 aa).

NAD(+)-binding positions include 7–12 (GASGRM) and Asp33. Residue Arg34 participates in NADP(+) binding. Residues 96–98 (GTT) and 120–123 (AANM) each bind NAD(+). His153 acts as the Proton donor/acceptor in catalysis. A (S)-2,3,4,5-tetrahydrodipicolinate-binding site is contributed by His154. Lys157 acts as the Proton donor in catalysis. 163-164 (GT) provides a ligand contact to (S)-2,3,4,5-tetrahydrodipicolinate.

Belongs to the DapB family.

The protein resides in the cytoplasm. The catalysed reaction is (S)-2,3,4,5-tetrahydrodipicolinate + NAD(+) + H2O = (2S,4S)-4-hydroxy-2,3,4,5-tetrahydrodipicolinate + NADH + H(+). It carries out the reaction (S)-2,3,4,5-tetrahydrodipicolinate + NADP(+) + H2O = (2S,4S)-4-hydroxy-2,3,4,5-tetrahydrodipicolinate + NADPH + H(+). It participates in amino-acid biosynthesis; L-lysine biosynthesis via DAP pathway; (S)-tetrahydrodipicolinate from L-aspartate: step 4/4. Catalyzes the conversion of 4-hydroxy-tetrahydrodipicolinate (HTPA) to tetrahydrodipicolinate. This is 4-hydroxy-tetrahydrodipicolinate reductase from Burkholderia multivorans (strain ATCC 17616 / 249).